The sequence spans 390 residues: Leu/Ile/Val-binding protein homolog 6 (390 aa).

Positions 1–21 are cleaved as a signal peptide; it reads MKKIALTALAVFSLAASAAYA.

It belongs to the leucine-binding protein family.

Its function is as follows. Component of an amino-acid transport system. The chain is Leu/Ile/Val-binding protein homolog 6 from Brucella suis biovar 1 (strain 1330).